Reading from the N-terminus, the 1695-residue chain is Sialoadhesin (1695 aa).

The N-terminal stretch at 1-19 is a signal peptide; that stretch reads MCVLFSLLLLASVFSLGQT. Residues 20 to 136 form the Ig-like V-type domain; that stretch reads TWGVSSPKNV…DVKGTTVTVT (117 aa). Residues 20–1639 lie on the Extracellular side of the membrane; the sequence is TWGVSSPKNV…ALHQLQLFQR (1620 aa). Intrachain disulfides connect cysteine 36–cysteine 166, cysteine 41–cysteine 98, cysteine 160–cysteine 218, and cysteine 263–cysteine 306. N-acetylneuraminate-binding positions include tyrosine 63, arginine 116, and 122 to 126; that span reads SNRWL. Ig-like C2-type domains lie at 153-235, 239-321, 326-406, 416-508, 509-594, 602-701, 704-781, 795-890, 894-973, 980-1079, 1081-1161, 1172-1264, 1245-1337, 1342-1439, 1442-1520, and 1534-1627; these read GMER…YLQV, PKGV…SPLS, MAEV…SPLS, PDLT…LDFY, ANVA…TVLT, PTFT…ASFN, ATVL…AQLS, PKLS…FQVR, VQVS…APVS, PRHV…ADFD, QAVR…RPVT, RLTY…MNPS, KANT…ASLQ, PRDA…RLLT, DIRV…ATTS, and PTLI…AYFG. Asparagine 159 is a glycosylation site (N-linked (GlcNAc...) asparagine). N-linked (GlcNAc...) asparagine glycans are attached at residues asparagine 266, asparagine 299, and asparagine 340. 2 disulfide bridges follow: cysteine 347–cysteine 391 and cysteine 434–cysteine 492. Asparagine 500 carries N-linked (GlcNAc...) asparagine glycosylation. Cysteine 532 and cysteine 576 are oxidised to a cystine. N-linked (GlcNAc...) asparagine glycosylation occurs at asparagine 583. A disulfide bridge links cysteine 625 with cysteine 685. 3 N-linked (GlcNAc...) asparagine glycosylation sites follow: asparagine 693, asparagine 722, and asparagine 737. 2 disulfide bridges follow: cysteine 725/cysteine 770 and cysteine 813/cysteine 872. A Cell attachment site motif is present at residues 827–829; it reads RGD. A glycan (N-linked (GlcNAc...) asparagine) is linked at asparagine 882. Cystine bridges form between cysteine 912-cysteine 956 and cysteine 1001-cysteine 1063. Asparagine 1090 and asparagine 1100 each carry an N-linked (GlcNAc...) asparagine glycan. 2 cysteine pairs are disulfide-bonded: cysteine 1103/cysteine 1145 and cysteine 1189/cysteine 1237. Residue asparagine 1247 is glycosylated (N-linked (GlcNAc...) asparagine). 2 disulfide bridges follow: cysteine 1277–cysteine 1320 and cysteine 1363–cysteine 1422. N-linked (GlcNAc...) asparagine glycans are attached at residues asparagine 1460 and asparagine 1474. Disulfide bonds link cysteine 1463–cysteine 1509 and cysteine 1552–cysteine 1611. The helical transmembrane segment at 1640-1660 threads the bilayer; that stretch reads LLWVLGFLAGFLCLLLGLVAY. The Cytoplasmic portion of the chain corresponds to 1661-1695; that stretch reads HTWRKKSSTKLNEDENSAEMATKKNTIQEEVVAAL.

It belongs to the immunoglobulin superfamily. SIGLEC (sialic acid binding Ig-like lectin) family. In terms of assembly, interacts with CLEC10A. In terms of tissue distribution, detected in lymph node in the subcapsular sinus, interfollicular regions, and T and B-cell boundary (at protein level). Expressed by macrophages in various tissues. Highest expression in spleen and lymph node with lower amounts in lung, liver, bone marrow, heart and skin. No expression in thymus, kidney, brain or small intestine.

It is found in the cell membrane. It localises to the secreted. Its function is as follows. Macrophage-restricted adhesion molecule that mediates sialic-acid dependent binding to lymphocytes, including granulocytes, monocytes, natural killer cells, B-cells and CD8 T-cells. Plays a crucial role in limiting bacterial dissemination by engaging sialylated bacteria to promote effective phagocytosis and antigen presentation for the adaptive immune response. Mediates the uptake of various enveloped viruses via sialic acid recognition and subsequently induces the formation of intracellular compartments filled with virions (VCCs). In turn, enhances macrophage-to-T-cell transmission of several viruses including murine leukemia virus. Acts as an endocytic receptor mediating clathrin dependent endocytosis. Preferentially binds to alpha-2,3-linked sialic acid. Binds to SPN/CD43 on T-cells. May play a role in hemopoiesis. Plays a role in the inhibition of antiviral innate immune by promoting TBK1 degradation via TYROBP and TRIM27-mediated ubiquitination. This is Sialoadhesin (Siglec1) from Mus musculus (Mouse).